A 32-amino-acid polypeptide reads, in one-letter code: Photosystem II reaction center protein Z (32 aa).

The helical transmembrane segment at isoleucine 9–tyrosine 29 threads the bilayer.

Belongs to the PsbZ family. PSII is composed of 1 copy each of membrane proteins PsbA, PsbB, PsbC, PsbD, PsbE, PsbF, PsbH, PsbI, PsbJ, PsbK, PsbL, PsbM, PsbT, PsbY, PsbZ, Psb30/Ycf12, at least 3 peripheral proteins of the oxygen-evolving complex and a large number of cofactors. It forms dimeric complexes.

It is found in the plastid. Its subcellular location is the chloroplast thylakoid membrane. Its function is as follows. May control the interaction of photosystem II (PSII) cores with the light-harvesting antenna, regulates electron flow through the 2 photosystem reaction centers. PSII is a light-driven water plastoquinone oxidoreductase, using light energy to abstract electrons from H(2)O, generating a proton gradient subsequently used for ATP formation. The sequence is that of Photosystem II reaction center protein Z from Euglena myxocylindracea.